The sequence spans 221 residues: MNKLIQLALFFTLMLTGCSNSSTSSESKVETTVKTTAAFPQKELEKELKKLKPVSLDMKFESPLATELGKRKAKEEAEKQRQIAAEKKLEKEREAKRKKQQEEKAERQRLAEQQAAERQRLAEAERQAELERQRQAAIQKEQKANAEKKRQSQAQRQQTEAPSSNSQDPPSSSSQTDKTIQQPASELPDDDGYGYEERKKWHDDQVEWGIKQGYIDPEDAP.

The N-terminal stretch at 1-23 (MNKLIQLALFFTLMLTGCSNSST) is a signal peptide. The tract at residues 67-221 (ELGKRKAKEE…QGYIDPEDAP (155 aa)) is disordered. The span at 68–150 (LGKRKAKEEA…EQKANAEKKR (83 aa)) shows a compositional bias: basic and acidic residues. The stretch at 70 to 161 (KRKAKEEAEK…SQAQRQQTEA (92 aa)) forms a coiled coil. A compositionally biased stretch (polar residues) spans 152-161 (SQAQRQQTEA). The span at 162-174 (PSSNSQDPPSSSS) shows a compositional bias: low complexity. Over residues 175–184 (QTDKTIQQPA) the composition is skewed to polar residues. Over residues 195-205 (YEERKKWHDDQ) the composition is skewed to basic and acidic residues.

This is an uncharacterized protein from Bacillus subtilis (strain 168).